An 82-amino-acid polypeptide reads, in one-letter code: MNPIVAAASVIAAGLAVGLAAIGPGMGQGTAAGYAVEGIARQPEAEGKIRGALLLSFAFMESLTIYGLVVALALLFANPFAG.

2 helical membrane passes run 3-23 (PIVA…AAIG) and 57-77 (FAFM…LLFA).

Belongs to the ATPase C chain family. In terms of assembly, F-type ATPases have 2 components, F(1) - the catalytic core - and F(0) - the membrane proton channel. F(1) has five subunits: alpha(3), beta(3), gamma(1), delta(1), epsilon(1). F(0) has four main subunits: a(1), b(1), b'(1) and c(10-14). The alpha and beta chains form an alternating ring which encloses part of the gamma chain. F(1) is attached to F(0) by a central stalk formed by the gamma and epsilon chains, while a peripheral stalk is formed by the delta, b and b' chains.

Its subcellular location is the plastid. It is found in the chloroplast thylakoid membrane. In terms of biological role, f(1)F(0) ATP synthase produces ATP from ADP in the presence of a proton or sodium gradient. F-type ATPases consist of two structural domains, F(1) containing the extramembraneous catalytic core and F(0) containing the membrane proton channel, linked together by a central stalk and a peripheral stalk. During catalysis, ATP synthesis in the catalytic domain of F(1) is coupled via a rotary mechanism of the central stalk subunits to proton translocation. Functionally, key component of the F(0) channel; it plays a direct role in translocation across the membrane. A homomeric c-ring of between 10-14 subunits forms the central stalk rotor element with the F(1) delta and epsilon subunits. In Chlorella vulgaris (Green alga), this protein is ATP synthase subunit c, chloroplastic.